The chain runs to 203 residues: Peptide deformylase (203 aa).

Fe cation is bound by residues Cys-130 and His-173. Glu-174 is a catalytic residue. His-177 provides a ligand contact to Fe cation.

This sequence belongs to the polypeptide deformylase family. The cofactor is Fe(2+).

The enzyme catalyses N-terminal N-formyl-L-methionyl-[peptide] + H2O = N-terminal L-methionyl-[peptide] + formate. Its function is as follows. Removes the formyl group from the N-terminal Met of newly synthesized proteins. Requires at least a dipeptide for an efficient rate of reaction. N-terminal L-methionine is a prerequisite for activity but the enzyme has broad specificity at other positions. The polypeptide is Peptide deformylase (Streptococcus pneumoniae serotype 2 (strain D39 / NCTC 7466)).